A 161-amino-acid chain; its full sequence is Peptidyl-prolyl cis-trans isomerase-like 1 (161 aa).

The region spanning 1 to 155 (MATDVAFDTS…DEVKIIRARV (155 aa)) is the PPIase cyclophilin-type domain.

Belongs to the cyclophilin-type PPIase family. PPIL1 subfamily.

It carries out the reaction [protein]-peptidylproline (omega=180) = [protein]-peptidylproline (omega=0). Functionally, PPIases accelerate the folding of proteins. It catalyzes the cis-trans isomerization of proline imidic peptide bonds in oligopeptides. The polypeptide is Peptidyl-prolyl cis-trans isomerase-like 1 (cyp1) (Aspergillus oryzae (strain ATCC 42149 / RIB 40) (Yellow koji mold)).